A 387-amino-acid polypeptide reads, in one-letter code: Small ribosomal subunit protein uS5m (387 aa).

Residues 1–22 constitute a mitochondrion transit peptide; that stretch reads MLRSFSHFLQIGSRRQPTYFRC. The disordered stretch occupies residues 33 to 87; it reads FKNDPKKELNSNLNEKSVEESSKNETKEQFNSSSIPRESESEGKTASNTSPLSPK. The span at 48-60 shows a compositional bias: basic and acidic residues; that stretch reads KSVEESSKNETKE. Residue serine 85 is modified to Phosphoserine. The S5 DRBM domain occupies 225-288; the sequence is LMFVPLVRRR…GRAVKNMVYI (64 aa).

This sequence belongs to the universal ribosomal protein uS5 family. As to quaternary structure, component of the mitochondrial small ribosomal subunit (mt-SSU). Mature yeast 74S mitochondrial ribosomes consist of a small (37S) and a large (54S) subunit. The 37S small subunit contains a 15S ribosomal RNA (15S mt-rRNA) and at least 32 different proteins. The 54S large subunit contains a 21S rRNA (21S mt-rRNA) and at least 45 different proteins. uS3m, uS4m and uS5m form the narrow entry site of the mRNA channel.

The protein localises to the mitochondrion. Component of the mitochondrial ribosome (mitoribosome), a dedicated translation machinery responsible for the synthesis of mitochondrial genome-encoded proteins, including at least some of the essential transmembrane subunits of the mitochondrial respiratory chain. The mitoribosomes are attached to the mitochondrial inner membrane and translation products are cotranslationally integrated into the membrane. This chain is Small ribosomal subunit protein uS5m (mrp5), found in Schizosaccharomyces pombe (strain 972 / ATCC 24843) (Fission yeast).